The chain runs to 156 residues: Non-structural protein 2 (156 aa).

This sequence belongs to the pneumovirus non-structural protein 2 family.

It localises to the host cytoplasm. In terms of biological role, plays a major role in antagonizing the type I IFN-mediated antiviral response. May also inhibit viral transcription and RNA replication. The sequence is that of Non-structural protein 2 (1B) from Mus musculus (Mouse).